The chain runs to 433 residues: UDP-N-acetylglucosamine 1-carboxyvinyltransferase 1 (433 aa).

22–23 (KN) is a binding site for phosphoenolpyruvate. Arginine 95 lines the UDP-N-acetyl-alpha-D-glucosamine pocket. Cysteine 119 acts as the Proton donor in catalysis. Cysteine 119 carries the post-translational modification 2-(S-cysteinyl)pyruvic acid O-phosphothioketal. UDP-N-acetyl-alpha-D-glucosamine-binding positions include 124 to 128 (RPVDL), aspartate 307, and valine 329.

The protein belongs to the EPSP synthase family. MurA subfamily.

It localises to the cytoplasm. It carries out the reaction phosphoenolpyruvate + UDP-N-acetyl-alpha-D-glucosamine = UDP-N-acetyl-3-O-(1-carboxyvinyl)-alpha-D-glucosamine + phosphate. Its pathway is cell wall biogenesis; peptidoglycan biosynthesis. In terms of biological role, cell wall formation. Adds enolpyruvyl to UDP-N-acetylglucosamine. The chain is UDP-N-acetylglucosamine 1-carboxyvinyltransferase 1 from Latilactobacillus sakei subsp. sakei (strain 23K) (Lactobacillus sakei subsp. sakei).